The following is a 539-amino-acid chain: Probable glycerol kinase (539 aa).

T12 is a binding site for substrate. R16 lines the ATP pocket. Residues R86, Y168, and D285 each coordinate substrate. Residues T307, G352, and 453–457 (GMAKN) contribute to the ATP site.

It belongs to the FGGY kinase family.

The enzyme catalyses glycerol + ATP = sn-glycerol 3-phosphate + ADP + H(+). The protein operates within polyol metabolism; glycerol degradation via glycerol kinase pathway; sn-glycerol 3-phosphate from glycerol: step 1/1. The chain is Probable glycerol kinase (gk) from Dictyostelium discoideum (Social amoeba).